The following is a 572-amino-acid chain: Proline--tRNA ligase (572 aa).

Belongs to the class-II aminoacyl-tRNA synthetase family. ProS type 1 subfamily. Homodimer.

It localises to the cytoplasm. The catalysed reaction is tRNA(Pro) + L-proline + ATP = L-prolyl-tRNA(Pro) + AMP + diphosphate. Its function is as follows. Catalyzes the attachment of proline to tRNA(Pro) in a two-step reaction: proline is first activated by ATP to form Pro-AMP and then transferred to the acceptor end of tRNA(Pro). As ProRS can inadvertently accommodate and process non-cognate amino acids such as alanine and cysteine, to avoid such errors it has two additional distinct editing activities against alanine. One activity is designated as 'pretransfer' editing and involves the tRNA(Pro)-independent hydrolysis of activated Ala-AMP. The other activity is designated 'posttransfer' editing and involves deacylation of mischarged Ala-tRNA(Pro). The misacylated Cys-tRNA(Pro) is not edited by ProRS. This is Proline--tRNA ligase from Shewanella amazonensis (strain ATCC BAA-1098 / SB2B).